Consider the following 156-residue polypeptide: Small ribosomal subunit protein uS7 (156 aa).

This sequence belongs to the universal ribosomal protein uS7 family. As to quaternary structure, part of the 30S ribosomal subunit. Contacts proteins S9 and S11.

Functionally, one of the primary rRNA binding proteins, it binds directly to 16S rRNA where it nucleates assembly of the head domain of the 30S subunit. Is located at the subunit interface close to the decoding center, probably blocks exit of the E-site tRNA. This is Small ribosomal subunit protein uS7 from Exiguobacterium sibiricum (strain DSM 17290 / CCUG 55495 / CIP 109462 / JCM 13490 / 255-15).